The following is a 377-amino-acid chain: Succinyl-diaminopimelate desuccinylase (377 aa).

Histidine 68 contacts Zn(2+). The active site involves aspartate 70. Zn(2+) is bound at residue aspartate 101. Glutamate 135 serves as the catalytic Proton acceptor. Zn(2+) contacts are provided by glutamate 136, glutamate 164, and histidine 350.

Belongs to the peptidase M20A family. DapE subfamily. In terms of assembly, homodimer. The cofactor is Zn(2+). Co(2+) is required as a cofactor.

It catalyses the reaction N-succinyl-(2S,6S)-2,6-diaminopimelate + H2O = (2S,6S)-2,6-diaminopimelate + succinate. It participates in amino-acid biosynthesis; L-lysine biosynthesis via DAP pathway; LL-2,6-diaminopimelate from (S)-tetrahydrodipicolinate (succinylase route): step 3/3. Its function is as follows. Catalyzes the hydrolysis of N-succinyl-L,L-diaminopimelic acid (SDAP), forming succinate and LL-2,6-diaminopimelate (DAP), an intermediate involved in the bacterial biosynthesis of lysine and meso-diaminopimelic acid, an essential component of bacterial cell walls. In Aliivibrio fischeri (strain ATCC 700601 / ES114) (Vibrio fischeri), this protein is Succinyl-diaminopimelate desuccinylase.